The primary structure comprises 209 residues: Histidine biosynthesis bifunctional protein HisIE (209 aa).

A phosphoribosyl-AMP cyclohydrolase region spans residues 1 to 116 (MKQADELRFN…EEQAADRFGI (116 aa)). The phosphoribosyl-ATP pyrophosphohydrolase stretch occupies residues 117-209 (MNELERVIAE…LKKRHSEIEE (93 aa)).

It in the N-terminal section; belongs to the PRA-CH family. The protein in the C-terminal section; belongs to the PRA-PH family.

It localises to the cytoplasm. The catalysed reaction is 1-(5-phospho-beta-D-ribosyl)-ATP + H2O = 1-(5-phospho-beta-D-ribosyl)-5'-AMP + diphosphate + H(+). The enzyme catalyses 1-(5-phospho-beta-D-ribosyl)-5'-AMP + H2O = 1-(5-phospho-beta-D-ribosyl)-5-[(5-phospho-beta-D-ribosylamino)methylideneamino]imidazole-4-carboxamide. The protein operates within amino-acid biosynthesis; L-histidine biosynthesis; L-histidine from 5-phospho-alpha-D-ribose 1-diphosphate: step 2/9. Its pathway is amino-acid biosynthesis; L-histidine biosynthesis; L-histidine from 5-phospho-alpha-D-ribose 1-diphosphate: step 3/9. The chain is Histidine biosynthesis bifunctional protein HisIE (hisI) from Bacillus subtilis (strain 168).